The following is a 304-amino-acid chain: Methionyl-tRNA formyltransferase (304 aa).

Serine 110–proline 113 serves as a coordination point for (6S)-5,6,7,8-tetrahydrofolate.

The protein belongs to the Fmt family.

The enzyme catalyses L-methionyl-tRNA(fMet) + (6R)-10-formyltetrahydrofolate = N-formyl-L-methionyl-tRNA(fMet) + (6S)-5,6,7,8-tetrahydrofolate + H(+). Attaches a formyl group to the free amino group of methionyl-tRNA(fMet). The formyl group appears to play a dual role in the initiator identity of N-formylmethionyl-tRNA by promoting its recognition by IF2 and preventing the misappropriation of this tRNA by the elongation apparatus. The protein is Methionyl-tRNA formyltransferase of Sulfurovum sp. (strain NBC37-1).